A 55-amino-acid chain; its full sequence is Large ribosomal subunit protein bL33 (55 aa).

Belongs to the bacterial ribosomal protein bL33 family.

This is Large ribosomal subunit protein bL33 from Aromatoleum aromaticum (strain DSM 19018 / LMG 30748 / EbN1) (Azoarcus sp. (strain EbN1)).